The following is a 273-amino-acid chain: ABC transporter glutamine-binding protein GlnH (273 aa).

The first 20 residues, 1-20 (MKKIFSLALISLFAVILLAA), serve as a signal peptide directing secretion. A lipid anchor (N-palmitoyl cysteine) is attached at Cys-21. Cys-21 carries S-diacylglycerol cysteine lipidation.

It belongs to the bacterial solute-binding protein 3 family. In terms of assembly, the complex is composed of two ATP-binding proteins (GlnQ), two transmembrane proteins (GlnM and GlnP) and a solute-binding protein (GlnH).

Its subcellular location is the cell membrane. Part of the ABC transporter complex GlnHMPQ involved in glutamine transport. This chain is ABC transporter glutamine-binding protein GlnH (glnH), found in Bacillus subtilis (strain 168).